The chain runs to 91 residues: Acyl carrier protein AsbD (91 aa).

The Carrier domain occupies Glu4–Gln82. The residue at position 40 (Ser40) is an O-(pantetheine 4'-phosphoryl)serine.

This sequence belongs to the acyl carrier protein (ACP) family. Activated by the transfer of a 4'-phosphopantetheine group from CoA to Ser-40.

It participates in siderophore biosynthesis; petrobactin biosynthesis. Its function is as follows. Involved in the biosynthesis of petrobactin, a catecholate siderophore that functions in both iron acquisition and virulence. Aryl-carrier protein that activates 3,4-dihydroxybenzoate (3,4-DHBA) prior to its incorporation into petrobactin. In Bacillus anthracis, this protein is Acyl carrier protein AsbD.